Here is a 1500-residue protein sequence, read N- to C-terminus: Secreted chitinase LysM12 (1500 aa).

The signal sequence occupies residues 1–23; it reads MAPLWNGMAAGLLLSAAVVSGQA. N-linked (GlcNAc...) asparagine glycans are attached at residues N53, N225, N251, and N270. LysM domains are found at residues 303–348 and 367–415; these read RTQK…HVCC and ATTT…VICI. In terms of domain architecture, Chitin-binding type-1 spans 428–496; that stretch reads DAECGPQVPG…TNGCISHCGM (69 aa). 4 disulfides stabilise this stretch: C431/C459, C453/C465, C458/C472, and C490/C494. Residues 507 to 879 enclose the GH18 domain; the sequence is FRSVGYYESY…PGMILQMKSG (373 aa). The Proton donor role is filled by E625. Residue Y626 coordinates chitin. N-linked (GlcNAc...) asparagine glycans are attached at residues N721 and N800. W852 is a binding site for chitin. N-linked (GlcNAc...) asparagine glycosylation is found at N892 and N983. The interval 1164 to 1193 is disordered; the sequence is IPKDIPYPDKTKRKDKDDDDNKKTEATDSE. Residues 1169–1193 are compositionally biased toward basic and acidic residues; that stretch reads PYPDKTKRKDKDDDDNKKTEATDSE.

Belongs to the glycosyl hydrolase 18 family. Chitinase class V subfamily.

Its subcellular location is the secreted. The catalysed reaction is Random endo-hydrolysis of N-acetyl-beta-D-glucosaminide (1-&gt;4)-beta-linkages in chitin and chitodextrins.. Secreted chitinase involved in the degradation of chitin, a component of the cell walls of fungi and exoskeletal elements of some animals (including worms and arthropods). Involved in pathogenesis via manipulation of host defenses for successful infection. The chain is Secreted chitinase LysM12 from Penicillium expansum (Blue mold rot fungus).